Consider the following 268-residue polypeptide: Short chain dehydrogenase/reductase dpchG (268 aa).

Positions 18, 70, 97, 131, 165, and 169 each coordinate NADP(+). Catalysis depends on Tyr165, which acts as the Proton acceptor. Catalysis depends on Lys169, which acts as the Lowers pKa of active site Tyr.

The protein belongs to the short-chain dehydrogenases/reductases (SDR) family.

Its pathway is secondary metabolite biosynthesis; terpenoid biosynthesis. Functionally, short chain dehydrogenase/reductase; part of the gene cluster that mediates the biosynthesis of the diterpenoid pyrones higginsianins A and B. The first step of the pathway is the synthesis of the alpha-pyrone moiety by the polyketide synthase dpchA via condensation of one acetyl-CoA starter unit with 3 malonyl-CoA units and 2 methylations. The alpha-pyrone is then combined with geranylgeranyl pyrophosphate (GGPP) formed by the GGPP synthase dpchD through the action of the prenyltransferase dpchC to yield a linear alpha-pyrone diterpenoid. Subsequent steps in the diterpenoid pyrone biosynthetic pathway involve the decalin core formation, which is initiated by the epoxidation of the C10-C11 olefin by the FAD-dependent oxidoreductase dpchE, and is followed by a cyclization cascade catalyzed by the terpene cyclase dpchB. The short chain dehydrogenase/reductase dpchG then oxidizes the 8S hydroxy group to a ketone and the short chain dehydrogenase/reductase dpchH reduces the ketone to the 8R hydroxy group to yield higginsianin B. Finally, the FAD-dependent oxidoreductase dpchF converts higginsianin B into higginsianin A. The sequence is that of Short chain dehydrogenase/reductase dpchG from Colletotrichum higginsianum (strain IMI 349063) (Crucifer anthracnose fungus).